Here is a 905-residue protein sequence, read N- to C-terminus: Probable coatomer subunit gamma (905 aa).

5 HEAT repeats span residues 265 to 302 (TQFR…NISD), 303 to 340 (DDLQ…TRPH), 374 to 412 (DESV…KFPR), 414 to 450 (QDSM…YIPE), and 525 to 563 (KFVQ…RDAF). Residue Ser-604 is modified to Phosphoserine.

It belongs to the COPG family. Oligomeric complex that consists of at least the alpha, beta, beta', gamma, delta, epsilon and zeta subunits.

The protein resides in the cytoplasm. The protein localises to the golgi apparatus membrane. It is found in the cytoplasmic vesicle. It localises to the COPI-coated vesicle membrane. Its function is as follows. The coatomer is a cytosolic protein complex that binds to dilysine motifs and reversibly associates with Golgi non-clathrin-coated vesicles, which further mediate biosynthetic protein transport from the ER, via the Golgi up to the trans Golgi network. Coatomer complex is required for budding from Golgi membranes, and is essential for the retrograde Golgi-to-ER transport of dilysine-tagged proteins. The sequence is that of Probable coatomer subunit gamma (sec21) from Schizosaccharomyces pombe (strain 972 / ATCC 24843) (Fission yeast).